A 1060-amino-acid polypeptide reads, in one-letter code: Protein transport protein Sec16B (1060 aa).

Positions 1–86 are disordered; sequence MELWAPQRLP…GDWHQPVSGV (86 aa). A required for endoplasmic reticulum localization region spans residues 34-224; that stretch reads RPVPHSWHNG…PSLASESNLL (191 aa). Basic and acidic residues predominate over residues 41–50; sequence HNGERFHQWQ. Over residues 51–60 the composition is skewed to polar residues; the sequence is DNRGSPQPQQ. 5 positions are modified to phosphoserine: S55, S143, S167, S188, and S191. 5 disordered regions span residues 163–236, 245–264, 711–733, 770–796, and 834–1060; these read ENQH…SSSY, APERDDPPASAAWSPVQADV, KVAGDIGDPHPTRSDISGAGGTT, PSPQQPFPLQPGSYPAGGGAGQTGTPR, and PGEN…TQPC. 2 stretches are compositionally biased toward polar residues: residues 165-195 and 213-222; these read QHSPFGTNSETHFQSNSRNPCKDSPASNSGQ and NKPSLASESN. The span at 223–236 shows a compositional bias: low complexity; that stretch reads LLQQRESGLSSSSY. A phosphoserine mark is found at S254 and S258. Residues 271-713 are central conserved domain (CCD); required for localization to endoplasmic reticulum exit sites; that stretch reads APMKFYIPHV…LRRQLEQKVA (443 aa). The span at 837–847 shows a compositional bias: polar residues; sequence NTVSQETSQPP. T858 is modified (phosphothreonine). Residues S868, S871, S874, S882, and S883 each carry the phosphoserine modification. Basic and acidic residues-rich tracts occupy residues 875 to 890 and 899 to 908; these read AKEDEKESSDEADKNS and KLGDGKEHTK. The segment covering 909 to 918 has biased composition (low complexity); it reads SSGFGWFSWF. Over residues 930–941 the composition is skewed to acidic residues; that stretch reads GDEDSSDSPDSE. Residues 991-1001 show a composition bias toward gly residues; that stretch reads AAAGAGVGGLS. Over residues 1031–1046 the composition is skewed to polar residues; the sequence is NPSQVPQLPTATSLNR.

The protein belongs to the SEC16 family. As to quaternary structure, SEC16A and SEC16B are each present in multiple copies in a heteromeric complex. Interacts with TFG. Interacts with SEC13. Ubiquitous.

The protein resides in the endoplasmic reticulum membrane. It localises to the golgi apparatus membrane. Its function is as follows. Plays a role in the organization of the endoplasmic reticulum exit sites (ERES), also known as transitional endoplasmic reticulum (tER). Required for secretory cargo traffic from the endoplasmic reticulum to the Golgi apparatus. Involved in peroxisome biogenesis. Regulates the transport of peroxisomal biogenesis factors PEX3 and PEX16 from the ER to peroxisomes. This chain is Protein transport protein Sec16B (SEC16B), found in Homo sapiens (Human).